A 685-amino-acid chain; its full sequence is ATP-dependent zinc metalloprotease FTSH 8, chloroplastic (685 aa).

The transit peptide at 1–37 (MAASSACLLGNGLSVYTTKQRFQKLGLDRTSKVTVVK) directs the protein to the chloroplast. The N-terminal 36 residues, 38 to 73 (ASLDEKKHEGRRGFFKLLLGNAAAGVGLLASGNANA), are a transit peptide targeting the thylakoid. Residues 38–161 (ASLDEKKHEG…HNAQEDQGSP (124 aa)) lie on the Lumenal, thylakoid side of the membrane. Residues 162-182 (ILNLIGNLAFPVILIGGLFLL) traverse the membrane as a helical segment. The Stromal portion of the chain corresponds to 183-685 (SRRSSGGMGG…STSTPTPASV (503 aa)). 260–267 (GPPGTGKT) provides a ligand contact to ATP. A Zn(2+)-binding site is contributed by His-481. The active site involves Glu-482. The Zn(2+) site is built by His-485 and Asp-559.

In the N-terminal section; belongs to the AAA ATPase family. The protein in the C-terminal section; belongs to the peptidase M41 family. As to quaternary structure, heterohexamers with FTSH1, FTSH2 and FTSH5. May also form homooligomers. Requires Zn(2+) as cofactor. Expressed in cotyledons, cauline and rosette leaves, stems, sepals, flovers and siliques. Very low in roots.

The protein resides in the plastid. It is found in the chloroplast thylakoid membrane. Its function is as follows. Part of a complex that function as an ATP-dependent zinc metallopeptidase. Involved in the thylakoid formation and in the removal of damaged D1 in the photosystem II, preventing cell death under high-intensity light conditions. In Arabidopsis thaliana (Mouse-ear cress), this protein is ATP-dependent zinc metalloprotease FTSH 8, chloroplastic (FTSH8).